The chain runs to 228 residues: Octanoyltransferase (228 aa).

Residues 31–212 (GETDGILILL…KFSEVFGIHF (182 aa)) enclose the BPL/LPL catalytic domain. Substrate is bound by residues 76–83 (RGGKITFH), 143–145 (AIG), and 156–158 (GIA). Residue Cys174 is the Acyl-thioester intermediate of the active site.

This sequence belongs to the LipB family.

Its subcellular location is the cytoplasm. It catalyses the reaction octanoyl-[ACP] + L-lysyl-[protein] = N(6)-octanoyl-L-lysyl-[protein] + holo-[ACP] + H(+). Its pathway is protein modification; protein lipoylation via endogenous pathway; protein N(6)-(lipoyl)lysine from octanoyl-[acyl-carrier-protein]: step 1/2. Functionally, catalyzes the transfer of endogenously produced octanoic acid from octanoyl-acyl-carrier-protein onto the lipoyl domains of lipoate-dependent enzymes. Lipoyl-ACP can also act as a substrate although octanoyl-ACP is likely to be the physiological substrate. The polypeptide is Octanoyltransferase (Thermoanaerobacter pseudethanolicus (strain ATCC 33223 / 39E) (Clostridium thermohydrosulfuricum)).